We begin with the raw amino-acid sequence, 1133 residues long: ATP-dependent DNA helicase homolog MER3 (1133 aa).

The Helicase ATP-binding domain maps to 34–229; it reads PLCFHSDINM…WLKVPTAGIK (196 aa). 47–54 lines the ATP pocket; it reads APTGSGKT. Residues 165 to 168 carry the DEVH box motif; the sequence is DEVH. Positions 263–460 constitute a Helicase C-terminal domain; sequence YIYDILMQYS…CLIEHLTAEI (198 aa). Positions 536 to 847 constitute an SEC63 domain; that stretch reads EPGRLMTKYY…FEEYIGIDLH (312 aa). The segment at 878-919 is disordered; that stretch reads ACIADDDNPVTSGPSNRKDKKDDMPSFKLIDDDSEEEKEPYV. Positions 893 to 908 are enriched in basic and acidic residues; sequence NRKDKKDDMPSFKLID. Residues 909 to 919 show a composition bias toward acidic residues; that stretch reads DDSEEEKEPYV.

Belongs to the helicase family. SKI2 subfamily. Expressed in meiocytes during meiosis.

The protein resides in the nucleus. It catalyses the reaction Couples ATP hydrolysis with the unwinding of duplex DNA by translocating in the 3'-5' direction.. The enzyme catalyses ATP + H2O = ADP + phosphate + H(+). In terms of biological role, DNA helicase required for crossover formation, complete synapsis of homologous chromosomes and bivalent formation during meiosis. Is specific to recombination events resulting in interference-sensitive crossovers (class I meiotic crossover). In Arabidopsis thaliana (Mouse-ear cress), this protein is ATP-dependent DNA helicase homolog MER3.